A 304-amino-acid polypeptide reads, in one-letter code: Acetyl-coenzyme A carboxylase carboxyl transferase subunit beta (304 aa).

A CoA carboxyltransferase N-terminal domain is found at 23 to 292; it reads VWTKCDSCGQ…PNPDAPREGV (270 aa). C27, C30, C46, and C49 together coordinate Zn(2+). The segment at 27 to 49 adopts a C4-type zinc-finger fold; sequence CDSCGQVLYRAELERNLEVCPKC. The interval 284-304 is disordered; it reads NPDAPREGVVVPPAPGQESEA.

Belongs to the AccD/PCCB family. Acetyl-CoA carboxylase is a heterohexamer composed of biotin carboxyl carrier protein (AccB), biotin carboxylase (AccC) and two subunits each of ACCase subunit alpha (AccA) and ACCase subunit beta (AccD). The cofactor is Zn(2+).

Its subcellular location is the cytoplasm. The enzyme catalyses N(6)-carboxybiotinyl-L-lysyl-[protein] + acetyl-CoA = N(6)-biotinyl-L-lysyl-[protein] + malonyl-CoA. Its pathway is lipid metabolism; malonyl-CoA biosynthesis; malonyl-CoA from acetyl-CoA: step 1/1. In terms of biological role, component of the acetyl coenzyme A carboxylase (ACC) complex. Biotin carboxylase (BC) catalyzes the carboxylation of biotin on its carrier protein (BCCP) and then the CO(2) group is transferred by the transcarboxylase to acetyl-CoA to form malonyl-CoA. The protein is Acetyl-coenzyme A carboxylase carboxyl transferase subunit beta of Salmonella arizonae (strain ATCC BAA-731 / CDC346-86 / RSK2980).